Consider the following 1699-residue polypeptide: Eukaryotic translation initiation factor 2-alpha kinase gcn-2 (1699 aa).

The RWD domain maps to 22–138 (EEKLALDAVY…HRVREFLTDH (117 aa)). Protein kinase domains lie at 108–507 (LTIL…DVVL) and 508–999 (VRNK…DEDL). ATP-binding positions include 114-122 (MADTWEGCV), Lys-154, 497-505 (LGRGGFGDV), and Lys-520. 2 disordered regions span residues 572–615 (DSSL…SLMP) and 632–725 (KEWS…SVFE). Residues 669–706 (SSDDEDDDDSSEIDWDAESEEVEDEESDDSDEEDEDDG) are compositionally biased toward acidic residues. Polar residues predominate over residues 711 to 720 (QLNTETSTGA). Residue Asp-829 is the Proton acceptor of the active site.

It belongs to the protein kinase superfamily. Ser/Thr protein kinase family. GCN2 subfamily.

It carries out the reaction L-seryl-[protein] + ATP = O-phospho-L-seryl-[protein] + ADP + H(+). It catalyses the reaction L-threonyl-[protein] + ATP = O-phospho-L-threonyl-[protein] + ADP + H(+). In terms of biological role, serine/threonine-protein kinase which phosphorylates the alpha subunit of eukaryotic translation-initiation factor 2 (eIF2alpha), leading to its inactivation and thus to a rapid reduction of translational initiation and repression of global protein synthesis. Involved in the unfolded protein response (UPR) triggered by several stresses including mitochondrial, osmotic and oxidative stresses, amino acid deprivation and UV irradiation, probably by phosphorylating and inhibiting eIF2alpha. In addition, leads to the selective translation/transcription of some mRNA including atf-5, pha-4 and gpdh-1 which are part of the UPR. Required for maintaining lifespan during amino acid starvation. Involved in hypoxia-mediated adaptive protective response. This chain is Eukaryotic translation initiation factor 2-alpha kinase gcn-2, found in Caenorhabditis elegans.